Consider the following 224-residue polypeptide: uncharacterized protein (224 aa).

The helical transmembrane segment at 21–41 (LTVILIIPIVYLGVCGCFEIV) threads the bilayer.

The protein resides in the membrane. This is an uncharacterized protein from Methanocaldococcus jannaschii (strain ATCC 43067 / DSM 2661 / JAL-1 / JCM 10045 / NBRC 100440) (Methanococcus jannaschii).